Consider the following 166-residue polypeptide: NAD(P)H-quinone oxidoreductase subunit I, chloroplastic (166 aa).

4Fe-4S ferredoxin-type domains lie at 55–84 (GRIH…VDWK) and 95–124 (LNYS…MTEE). Residues C64, C67, C70, C74, C104, C107, C110, and C114 each contribute to the [4Fe-4S] cluster site.

Belongs to the complex I 23 kDa subunit family. NDH is composed of at least 16 different subunits, 5 of which are encoded in the nucleus. [4Fe-4S] cluster is required as a cofactor.

Its subcellular location is the plastid. It is found in the chloroplast thylakoid membrane. It carries out the reaction a plastoquinone + NADH + (n+1) H(+)(in) = a plastoquinol + NAD(+) + n H(+)(out). The enzyme catalyses a plastoquinone + NADPH + (n+1) H(+)(in) = a plastoquinol + NADP(+) + n H(+)(out). Its function is as follows. NDH shuttles electrons from NAD(P)H:plastoquinone, via FMN and iron-sulfur (Fe-S) centers, to quinones in the photosynthetic chain and possibly in a chloroplast respiratory chain. The immediate electron acceptor for the enzyme in this species is believed to be plastoquinone. Couples the redox reaction to proton translocation, and thus conserves the redox energy in a proton gradient. The polypeptide is NAD(P)H-quinone oxidoreductase subunit I, chloroplastic (Pentanema britannica (British yellowhead)).